A 157-amino-acid polypeptide reads, in one-letter code: 6,7-dimethyl-8-ribityllumazine synthase (157 aa).

5-amino-6-(D-ribitylamino)uracil contacts are provided by residues Phe-24, 58–60 (SFE), and 82–84 (AVI). 87-88 (ET) serves as a coordination point for (2S)-2-hydroxy-3-oxobutyl phosphate. His-90 functions as the Proton donor in the catalytic mechanism. Phe-115 is a binding site for 5-amino-6-(D-ribitylamino)uracil. Arg-129 is a (2S)-2-hydroxy-3-oxobutyl phosphate binding site.

This sequence belongs to the DMRL synthase family.

The enzyme catalyses (2S)-2-hydroxy-3-oxobutyl phosphate + 5-amino-6-(D-ribitylamino)uracil = 6,7-dimethyl-8-(1-D-ribityl)lumazine + phosphate + 2 H2O + H(+). The protein operates within cofactor biosynthesis; riboflavin biosynthesis; riboflavin from 2-hydroxy-3-oxobutyl phosphate and 5-amino-6-(D-ribitylamino)uracil: step 1/2. Catalyzes the formation of 6,7-dimethyl-8-ribityllumazine by condensation of 5-amino-6-(D-ribitylamino)uracil with 3,4-dihydroxy-2-butanone 4-phosphate. This is the penultimate step in the biosynthesis of riboflavin. The protein is 6,7-dimethyl-8-ribityllumazine synthase of Thermus thermophilus (strain ATCC BAA-163 / DSM 7039 / HB27).